We begin with the raw amino-acid sequence, 1381 residues long: DNA-directed RNA polymerase subunit beta (1381 aa).

Belongs to the RNA polymerase beta chain family. The RNAP catalytic core consists of 2 alpha, 1 beta, 1 beta' and 1 omega subunit. When a sigma factor is associated with the core the holoenzyme is formed, which can initiate transcription.

It carries out the reaction RNA(n) + a ribonucleoside 5'-triphosphate = RNA(n+1) + diphosphate. DNA-dependent RNA polymerase catalyzes the transcription of DNA into RNA using the four ribonucleoside triphosphates as substrates. This chain is DNA-directed RNA polymerase subunit beta, found in Sulfurimonas denitrificans (strain ATCC 33889 / DSM 1251) (Thiomicrospira denitrificans (strain ATCC 33889 / DSM 1251)).